We begin with the raw amino-acid sequence, 272 residues long: Acyl-[acyl-carrier-protein]--UDP-N-acetylglucosamine O-acyltransferase (272 aa).

It belongs to the transferase hexapeptide repeat family. LpxA subfamily. As to quaternary structure, homotrimer.

It localises to the cytoplasm. The catalysed reaction is a (3R)-hydroxyacyl-[ACP] + UDP-N-acetyl-alpha-D-glucosamine = a UDP-3-O-[(3R)-3-hydroxyacyl]-N-acetyl-alpha-D-glucosamine + holo-[ACP]. Its pathway is glycolipid biosynthesis; lipid IV(A) biosynthesis; lipid IV(A) from (3R)-3-hydroxytetradecanoyl-[acyl-carrier-protein] and UDP-N-acetyl-alpha-D-glucosamine: step 1/6. In terms of biological role, involved in the biosynthesis of lipid A, a phosphorylated glycolipid that anchors the lipopolysaccharide to the outer membrane of the cell. This Methylobacterium radiotolerans (strain ATCC 27329 / DSM 1819 / JCM 2831 / NBRC 15690 / NCIMB 10815 / 0-1) protein is Acyl-[acyl-carrier-protein]--UDP-N-acetylglucosamine O-acyltransferase.